The following is a 227-amino-acid chain: tRNA (guanine-N(1)-)-methyltransferase (227 aa).

S-adenosyl-L-methionine contacts are provided by residues Gly110 and 129–134 (IGDYVL).

It belongs to the RNA methyltransferase TrmD family. As to quaternary structure, homodimer.

The protein localises to the cytoplasm. It catalyses the reaction guanosine(37) in tRNA + S-adenosyl-L-methionine = N(1)-methylguanosine(37) in tRNA + S-adenosyl-L-homocysteine + H(+). Specifically methylates guanosine-37 in various tRNAs. The sequence is that of tRNA (guanine-N(1)-)-methyltransferase from Mycoplasmopsis agalactiae (strain NCTC 10123 / CIP 59.7 / PG2) (Mycoplasma agalactiae).